Consider the following 656-residue polypeptide: Receptor-type tyrosine-protein phosphatase R (656 aa).

The first 23 residues, 1-23 (MRRAVGFPALCLLLNLHAAGCFS), serve as a signal peptide directing secretion. An O-linked (Xyl...) (chondroitin sulfate) serine glycan is attached at Ser-23. Residues 25-225 (NNDHFLAIRQ…HEADKIWSKE (201 aa)) are Extracellular-facing. N-linked (GlcNAc...) asparagine glycosylation is present at Asn-128. Residues 226–248 (GFYAVVIFLSIFIIIVTCLMIIY) traverse the membrane as a helical segment. Over 249 to 656 (RLKERLQLSF…ESRLSPETVQ (408 aa)) the chain is Cytoplasmic. Ser-271 carries the phosphoserine modification. Residue Ser-338 is modified to Phosphoserine; by PKA. Residues 392–646 (LQSEFMEIPM…EFVHHALCLF (255 aa)) form the Tyrosine-protein phosphatase domain. Substrate is bound by residues Asp-553, 587–593 (CSAGIGR), and Gln-631. Cys-587 acts as the Phosphocysteine intermediate in catalysis.

The protein belongs to the protein-tyrosine phosphatase family. Receptor class 7 subfamily. Interacts with MAPKs. As to expression, widely expressed in the brain, most abundant in cerebellum, midbrain, cerebral cortex and hippocampus. Also expressed in heart and skeletal muscle.

Its subcellular location is the cytoplasm. The protein localises to the cell membrane. The catalysed reaction is O-phospho-L-tyrosyl-[protein] + H2O = L-tyrosyl-[protein] + phosphate. Its function is as follows. Sequesters mitogen-activated protein kinases (MAPKs) such as MAPK1, MAPK3 and MAPK14 in the cytoplasm in an inactive form. The MAPKs bind to a dephosphorylated kinase interacting motif, phosphorylation of which by the protein kinase A complex releases the MAPKs for activation and translocation into the nucleus. The chain is Receptor-type tyrosine-protein phosphatase R (Ptprr) from Rattus norvegicus (Rat).